The primary structure comprises 573 residues: Sulfite reductase [NADPH] hemoprotein beta-component (573 aa).

Residues cysteine 438, cysteine 444, cysteine 483, and cysteine 487 each contribute to the [4Fe-4S] cluster site. Cysteine 487 contacts siroheme.

Belongs to the nitrite and sulfite reductase 4Fe-4S domain family. As to quaternary structure, alpha(8)-beta(8). The alpha component is a flavoprotein, the beta component is a hemoprotein. It depends on siroheme as a cofactor. The cofactor is [4Fe-4S] cluster.

It catalyses the reaction hydrogen sulfide + 3 NADP(+) + 3 H2O = sulfite + 3 NADPH + 4 H(+). It functions in the pathway sulfur metabolism; hydrogen sulfide biosynthesis; hydrogen sulfide from sulfite (NADPH route): step 1/1. Its function is as follows. Component of the sulfite reductase complex that catalyzes the 6-electron reduction of sulfite to sulfide. This is one of several activities required for the biosynthesis of L-cysteine from sulfate. The polypeptide is Sulfite reductase [NADPH] hemoprotein beta-component (Staphylococcus haemolyticus (strain JCSC1435)).